Here is a 310-residue protein sequence, read N- to C-terminus: Succinate dehydrogenase assembly factor 2, mitochondrial (310 aa).

Residues 35–48 show a composition bias toward basic and acidic residues; that stretch reads LKDGSDEASPEVKA. The interval 35-67 is disordered; that stretch reads LKDGSDEASPEVKAHRANQANKAPNQFVPNTTS. Residues 52–67 are compositionally biased toward polar residues; that stretch reads NQANKAPNQFVPNTTS.

It belongs to the SDHAF2 family. Interacts with the flavoprotein subunit within the SDH catalytic dimer.

It localises to the mitochondrion matrix. Its function is as follows. Plays an essential role in the assembly of succinate dehydrogenase (SDH), an enzyme complex (also referred to as respiratory complex II) that is a component of both the tricarboxylic acid (TCA) cycle and the mitochondrial electron transport chain, and which couples the oxidation of succinate to fumarate with the reduction of ubiquinone (coenzyme Q) to ubiquinol. Required for flavinylation (covalent attachment of FAD) of the flavoprotein subunit of the SDH catalytic dimer. The polypeptide is Succinate dehydrogenase assembly factor 2, mitochondrial (Penicillium rubens (strain ATCC 28089 / DSM 1075 / NRRL 1951 / Wisconsin 54-1255) (Penicillium chrysogenum)).